The sequence spans 498 residues: ATP synthase subunit beta, chloroplastic (498 aa).

172–179 (GGAGVGKT) contributes to the ATP binding site.

This sequence belongs to the ATPase alpha/beta chains family. As to quaternary structure, F-type ATPases have 2 components, CF(1) - the catalytic core - and CF(0) - the membrane proton channel. CF(1) has five subunits: alpha(3), beta(3), gamma(1), delta(1), epsilon(1). CF(0) has four main subunits: a(1), b(1), b'(1) and c(9-12).

The protein resides in the plastid. The protein localises to the chloroplast thylakoid membrane. It carries out the reaction ATP + H2O + 4 H(+)(in) = ADP + phosphate + 5 H(+)(out). In terms of biological role, produces ATP from ADP in the presence of a proton gradient across the membrane. The catalytic sites are hosted primarily by the beta subunits. This Jasminum nudiflorum (Winter jasmine) protein is ATP synthase subunit beta, chloroplastic.